The primary structure comprises 991 residues: Antigenic heat-stable 120 kDa protein (991 aa).

Disordered stretches follow at residues 1-37 (DTSEFDPLANKEYTEEQKQTEEQEQKEFLSHTTTPAL), 54-73 (TPSMSALSGNISPDSQTSDP), and 348-384 (GQSKEQPLITPQQTTSSSVEPPQYKQQVPPITPTNQP). Positions 12–29 (EYTEEQKQTEEQEQKEFL) are enriched in basic and acidic residues. The segment covering 348–373 (GQSKEQPLITPQQTTSSSVEPPQYKQ) has biased composition (polar residues).

It localises to the cytoplasm. In Rickettsia sibirica, this protein is Antigenic heat-stable 120 kDa protein (sca4).